A 79-amino-acid chain; its full sequence is MSDIADKVKKIVVEHLGVDESKVTPDASFIDDLGADSLDTVELVMAFEEAFSVEIPEDAAEKIATVKDAIDYIEKQKAA.

The Carrier domain occupies 2-77; the sequence is SDIADKVKKI…DAIDYIEKQK (76 aa). Serine 37 is modified (O-(pantetheine 4'-phosphoryl)serine).

The protein belongs to the acyl carrier protein (ACP) family. Post-translationally, 4'-phosphopantetheine is transferred from CoA to a specific serine of apo-ACP by AcpS. This modification is essential for activity because fatty acids are bound in thioester linkage to the sulfhydryl of the prosthetic group.

It localises to the cytoplasm. The protein operates within lipid metabolism; fatty acid biosynthesis. Its function is as follows. Carrier of the growing fatty acid chain in fatty acid biosynthesis. The protein is Acyl carrier protein of Gluconobacter oxydans (strain 621H) (Gluconobacter suboxydans).